The primary structure comprises 993 residues: UPF0182 protein MAP_3291c (993 aa).

7 consecutive transmembrane segments (helical) span residues 18-38 (ILILIALGVIALLLAGPRLID), 63-83 (FVVFLIAGLLVGGIVFAGLAV), 113-133 (LVSVGVPVAIGLLAGIIAQSY), 175-195 (FVAVFLAFVANLLAHYIFGGI), 210-230 (IQLVTLVGLLVLLKAVAYWLD), 254-274 (AVLPAKLILMAIALICAAAVF), and 287-307 (IGLVLLLLSSLIVGAGWPLIV). A disordered region spans residues 903–941 (NIQPTEGGAPAASPPANAPAPAVTPGSAPPVAAPPVPDG). Over residues 929-939 (SAPPVAAPPVP) the composition is skewed to pro residues.

Belongs to the UPF0182 family.

Its subcellular location is the cell membrane. This is UPF0182 protein MAP_3291c from Mycolicibacterium paratuberculosis (strain ATCC BAA-968 / K-10) (Mycobacterium paratuberculosis).